Consider the following 510-residue polypeptide: Light-independent protochlorophyllide reductase subunit B (510 aa).

[4Fe-4S] cluster is bound at residue D36. The active-site Proton donor is D296. 431-432 (GM) contacts substrate.

This sequence belongs to the ChlB/BchB/BchZ family. As to quaternary structure, protochlorophyllide reductase is composed of three subunits; ChlL, ChlN and ChlB. Forms a heterotetramer of two ChlB and two ChlN subunits. The cofactor is [4Fe-4S] cluster.

It is found in the plastid. The protein resides in the chloroplast. The enzyme catalyses chlorophyllide a + oxidized 2[4Fe-4S]-[ferredoxin] + 2 ADP + 2 phosphate = protochlorophyllide a + reduced 2[4Fe-4S]-[ferredoxin] + 2 ATP + 2 H2O. The protein operates within porphyrin-containing compound metabolism; chlorophyll biosynthesis (light-independent). Its function is as follows. Component of the dark-operative protochlorophyllide reductase (DPOR) that uses Mg-ATP and reduced ferredoxin to reduce ring D of protochlorophyllide (Pchlide) to form chlorophyllide a (Chlide). This reaction is light-independent. The NB-protein (ChlN-ChlB) is the catalytic component of the complex. The chain is Light-independent protochlorophyllide reductase subunit B from Physcomitrium patens (Spreading-leaved earth moss).